We begin with the raw amino-acid sequence, 543 residues long: Chaperonin GroEL (543 aa).

ATP-binding positions include threonine 29–proline 32, lysine 50, aspartate 86–threonine 90, glycine 415, and aspartate 495.

This sequence belongs to the chaperonin (HSP60) family. As to quaternary structure, forms a cylinder of 14 subunits composed of two heptameric rings stacked back-to-back. Interacts with the co-chaperonin GroES.

The protein localises to the cytoplasm. It carries out the reaction ATP + H2O + a folded polypeptide = ADP + phosphate + an unfolded polypeptide.. Its function is as follows. Together with its co-chaperonin GroES, plays an essential role in assisting protein folding. The GroEL-GroES system forms a nano-cage that allows encapsulation of the non-native substrate proteins and provides a physical environment optimized to promote and accelerate protein folding. The chain is Chaperonin GroEL from Flavobacterium johnsoniae (strain ATCC 17061 / DSM 2064 / JCM 8514 / BCRC 14874 / CCUG 350202 / NBRC 14942 / NCIMB 11054 / UW101) (Cytophaga johnsonae).